The following is a 362-amino-acid chain: N-alpha-acetyltransferase 30 (362 aa).

Positions 1 to 20 are enriched in pro residues; the sequence is MAEVPPGPSSLLPPPAPPAP. Disordered stretches follow at residues 1-26, 38-88, and 113-182; these read MAEV…VEPR, CSED…NGLI, and ATTA…EEDE. Phosphoserine occurs at positions 39 and 55. Positions 39 to 48 are enriched in acidic residues; the sequence is SEDEEDDEEH. At Thr-117 the chain carries Phosphothreonine. Low complexity predominate over residues 149–165; it reads AVPSPVEAAAASDPAAA. The residue at position 152 (Ser-152) is a Phosphoserine. Over residues 173–182 the composition is skewed to acidic residues; sequence TEQEEEEEDE. Residues Ser-190, Ser-196, and Ser-199 each carry the phosphoserine modification. One can recognise an N-acetyltransferase domain in the interval 214-362; that stretch reads RYVRYESELQ…DALRLKLWLR (149 aa). Lys-233 carries the N6-acetyllysine modification.

Belongs to the acetyltransferase family. MAK3 subfamily. As to quaternary structure, component of the N-terminal acetyltransferase C (NatC) complex, which is composed of NAA35, NAA38 and NAA30.

It localises to the cytoplasm. It is found in the nucleus. The enzyme catalyses N-terminal L-methionyl-L-leucyl-[protein] + acetyl-CoA = N-terminal N(alpha)-acetyl-L-methionyl-L-leucyl-[protein] + CoA + H(+). It catalyses the reaction N-terminal L-methionyl-L-isoleucyl-[protein] + acetyl-CoA = N-terminal N(alpha)-acetyl-L-methionyl-L-isoleucyl-[protein] + CoA + H(+). The catalysed reaction is N-terminal L-methionyl-L-phenylalanyl-[protein] + acetyl-CoA = N-terminal N(alpha)-acetyl-L-methionyl-L-phenylalanyl-[protein] + CoA + H(+). It carries out the reaction N-terminal L-methionyl-L-tryptophyl-[protein] + acetyl-CoA = N-terminal N(alpha)-acetyl-L-methionyl-L-tryptophyl-[protein] + CoA + H(+). The enzyme catalyses N-terminal L-methionyl-L-tyrosyl-[protein] + acetyl-CoA = N-terminal N(alpha)-acetyl-L-methionyl-L-tyrosyl-[protein] + CoA + H(+). Its function is as follows. Catalytic subunit of the N-terminal acetyltransferase C (NatC) complex. Catalyzes acetylation of the N-terminal methionine residues of peptides beginning with Met-Leu-Ala and Met-Leu-Gly. N-terminal acetylation protects proteins from ubiquitination and degradation by the N-end rule pathway. Necessary for the lysosomal localization and function of ARL8B sugeesting that ARL8B is a NatC substrate. The polypeptide is N-alpha-acetyltransferase 30 (NAA30) (Homo sapiens (Human)).